The chain runs to 245 residues: Phosphoadenosine 5'-phosphosulfate reductase (245 aa).

Catalysis depends on C239, which acts as the Nucleophile; cysteine thiosulfonate intermediate.

It belongs to the PAPS reductase family. CysH subfamily.

It is found in the cytoplasm. It catalyses the reaction [thioredoxin]-disulfide + sulfite + adenosine 3',5'-bisphosphate + 2 H(+) = [thioredoxin]-dithiol + 3'-phosphoadenylyl sulfate. It participates in sulfur metabolism; hydrogen sulfide biosynthesis; sulfite from sulfate: step 3/3. Catalyzes the formation of sulfite from phosphoadenosine 5'-phosphosulfate (PAPS) using thioredoxin as an electron donor. This Baumannia cicadellinicola subsp. Homalodisca coagulata protein is Phosphoadenosine 5'-phosphosulfate reductase.